Consider the following 646-residue polypeptide: Protein kinase YegI (646 aa).

Residues 13–300 (VTPGRELGKG…KAWVAALDLL (288 aa)) form the Protein kinase domain. ATP is bound by residues 19 to 27 (LGKGGEGAV) and Lys39. Catalysis depends on Asp141, which acts as the Proton acceptor.

In terms of processing, autophosphorylated.

Probable serine/threonine kinase. This is Protein kinase YegI (yegI) from Escherichia coli O157:H7.